The sequence spans 179 residues: MASIDVGETIGIEQVEPVKFRFVCHCGFCPPSFVTARGAGSVSLRVVVHYVPSPEREDPESPTRGVDEVDGACSEPPTPRPEPRFRAIEEMGKIVVLVSVCPLRPALQHRWVGAPARRHRSDSVARRARFEPWRGRASRPTVLTPASGDSDDVDTRTFGCGCGPGHPPVDCMCDRQDWL.

Residues 53–82 (SPEREDPESPTRGVDEVDGACSEPPTPRPE) form a disordered region. A compositionally biased stretch (basic and acidic residues) spans 54–67 (PEREDPESPTRGVD).

This is an uncharacterized protein from Ictaluridae (bullhead catfishes).